The following is a 486-amino-acid chain: 2-isopropylmalate synthase (486 aa).

Positions valine 4–alanine 266 constitute a Pyruvate carboxyltransferase domain. Residues aspartate 13, histidine 201, histidine 203, and asparagine 237 each coordinate Mn(2+). A regulatory domain region spans residues lysine 390–alanine 486.

It belongs to the alpha-IPM synthase/homocitrate synthase family. LeuA type 1 subfamily. Mn(2+) serves as cofactor.

It is found in the cytoplasm. It catalyses the reaction 3-methyl-2-oxobutanoate + acetyl-CoA + H2O = (2S)-2-isopropylmalate + CoA + H(+). It participates in amino-acid biosynthesis; L-leucine biosynthesis; L-leucine from 3-methyl-2-oxobutanoate: step 1/4. In terms of biological role, catalyzes the condensation of the acetyl group of acetyl-CoA with 3-methyl-2-oxobutanoate (2-ketoisovalerate) to form 3-carboxy-3-hydroxy-4-methylpentanoate (2-isopropylmalate). The chain is 2-isopropylmalate synthase from Pyrococcus abyssi (strain GE5 / Orsay).